A 425-amino-acid chain; its full sequence is Serine--tRNA ligase (425 aa).

229–231 serves as a coordination point for L-serine; sequence TSE. Residues 259–261 and valine 275 each bind ATP; that span reads RKE. Glutamate 282 is a binding site for L-serine. An ATP-binding site is contributed by 349 to 352; the sequence is EVTS. L-serine is bound at residue threonine 384.

It belongs to the class-II aminoacyl-tRNA synthetase family. Type-1 seryl-tRNA synthetase subfamily. As to quaternary structure, homodimer. The tRNA molecule binds across the dimer.

It is found in the cytoplasm. It catalyses the reaction tRNA(Ser) + L-serine + ATP = L-seryl-tRNA(Ser) + AMP + diphosphate + H(+). The catalysed reaction is tRNA(Sec) + L-serine + ATP = L-seryl-tRNA(Sec) + AMP + diphosphate + H(+). Its pathway is aminoacyl-tRNA biosynthesis; selenocysteinyl-tRNA(Sec) biosynthesis; L-seryl-tRNA(Sec) from L-serine and tRNA(Sec): step 1/1. In terms of biological role, catalyzes the attachment of serine to tRNA(Ser). Is also able to aminoacylate tRNA(Sec) with serine, to form the misacylated tRNA L-seryl-tRNA(Sec), which will be further converted into selenocysteinyl-tRNA(Sec). In Borreliella burgdorferi (strain ATCC 35210 / DSM 4680 / CIP 102532 / B31) (Borrelia burgdorferi), this protein is Serine--tRNA ligase.